The primary structure comprises 574 residues: DNA-directed primase/polymerase protein (574 aa).

A coiled-coil region spans residues Lys-2–Asn-22. Residues Arg-76, Asp-116 to Glu-118, Lys-167 to His-171, Arg-291 to Arg-294, and Lys-300 contribute to the substrate site. Mn(2+) is bound by residues Asp-116 and Glu-118. The Zn(2+) site is built by Cys-424, His-431, Cys-451, and Cys-456. The short motif at Cys-424 to Arg-457 is the Zinc knuckle motif element.

It belongs to the eukaryotic-type primase small subunit family. Mn(2+) is required as a cofactor.

The protein localises to the nucleus. The protein resides in the mitochondrion matrix. Its subcellular location is the chromosome. The enzyme catalyses ssDNA + n NTP = ssDNA/pppN(pN)n-1 hybrid + (n-1) diphosphate.. It catalyses the reaction DNA(n) + a 2'-deoxyribonucleoside 5'-triphosphate = DNA(n+1) + diphosphate. Functionally, DNA primase and DNA polymerase required to tolerate replication-stalling lesions by bypassing them. Required to facilitate mitochondrial and nuclear replication fork progression by initiating de novo DNA synthesis using dNTPs and acting as an error-prone DNA polymerase able to bypass certain DNA lesions. Shows a high capacity to tolerate DNA damage lesions such as 8oxoG and abasic sites in DNA. Provides different translesion synthesis alternatives when DNA replication is stalled: able to synthesize DNA primers downstream of lesions, such as UV lesions, R-loops and G-quadruplexes, to allow DNA replication to continue. Can also realign primers ahead of 'unreadable lesions' such as abasic sites and 6-4 photoproduct (6-4 pyrimidine-pyrimidinone), thereby skipping the lesion. Repriming avoids fork degradation while leading to accumulation of internal ssDNA gaps behind the forks. Also able to incorporate nucleotides opposite DNA lesions such as 8oxoG, like a regular translesion synthesis DNA polymerase. Also required for reinitiating stalled forks after ultraviolet (UV) damage during nuclear DNA replication. Required for mitochondrial DNA (mtDNA) synthesis and replication, by reinitiating synthesis after UV damage or in the presence of chain-terminating nucleotides. In addition to its role in DNA damage response, also required to maintain efficient nuclear and mitochondrial DNA replication in unperturbed cells. The sequence is that of DNA-directed primase/polymerase protein from Gallus gallus (Chicken).